Reading from the N-terminus, the 427-residue chain is Enolase (427 aa).

Gln162 contributes to the (2R)-2-phosphoglycerate binding site. The Proton donor role is filled by Glu204. Positions 241, 284, and 311 each coordinate Mg(2+). Lys336, Arg365, Ser366, and Lys387 together coordinate (2R)-2-phosphoglycerate. Catalysis depends on Lys336, which acts as the Proton acceptor.

It belongs to the enolase family. The cofactor is Mg(2+).

The protein resides in the cytoplasm. It localises to the secreted. The protein localises to the cell surface. It catalyses the reaction (2R)-2-phosphoglycerate = phosphoenolpyruvate + H2O. The protein operates within carbohydrate degradation; glycolysis; pyruvate from D-glyceraldehyde 3-phosphate: step 4/5. Catalyzes the reversible conversion of 2-phosphoglycerate (2-PG) into phosphoenolpyruvate (PEP). It is essential for the degradation of carbohydrates via glycolysis. The polypeptide is Enolase (Natranaerobius thermophilus (strain ATCC BAA-1301 / DSM 18059 / JW/NM-WN-LF)).